Here is a 268-residue protein sequence, read N- to C-terminus: Tetraspanin-33 (268 aa).

At Met-1–Tyr-23 the chain is on the cytoplasmic side. A helical membrane pass occupies residues Leu-24–Val-44. The Extracellular portion of the chain corresponds to Tyr-45–Pro-63. A helical transmembrane segment spans residues Ala-64 to Gly-84. Residues Ser-85–Thr-95 lie on the Cytoplasmic side of the membrane. The chain crosses the membrane as a helical span at residues Phe-96–Ile-116. Over Phe-117–Arg-226 the chain is Extracellular. 4 disulfides stabilise this stretch: Cys-155-Cys-223, Cys-156-Cys-188, Cys-172-Cys-182, and Cys-189-Cys-202. Asn-171 and Asn-176 each carry an N-linked (GlcNAc...) asparagine glycan. The chain crosses the membrane as a helical span at residues Leu-227–Ile-247. Residues Pro-248–Val-268 lie on the Cytoplasmic side of the membrane.

It belongs to the tetraspanin (TM4SF) family. Homodimer; disulfide-linked.

It is found in the cell membrane. Its subcellular location is the cell junction. The protein resides in the adherens junction. It localises to the cytoplasm. Its function is as follows. Part of TspanC8 subgroup, composed of 6 members that interact with the transmembrane metalloprotease ADAM10. This interaction is required for ADAM10 exit from the endoplasmic reticulum and for enzymatic maturation and trafficking to the cell surface as well as substrate specificity. Different TspanC8/ADAM10 complexes have distinct substrates. The sequence is that of Tetraspanin-33 (tspan33) from Xenopus laevis (African clawed frog).